Here is a 446-residue protein sequence, read N- to C-terminus: MTTILENLPAGQKVGIAFSGGLDTSAALHWMRIKGAVPYAYTANLGQPDEDDYDAIPKRAIQYGAEGARLIDCRAQLVAEGIAALQCGAFHISTAGVTYFNTTPIGRAVTGTMLVAAMKEDGVNIWGDGSTYKGNDIERFYRYGLLVNPDLKIYKPWLDQQFIDELGGRAEMSEFMRQAGFEYKMSAEKAYSTDSNLLGATHEAKDLESLESGIKIVNPIMGVAFWRDDVKIDKEEVTIRFEEGRPVALNGVEYKDAVALLLEANRIGGRHGLGMSDQIENRIIEAKSRGIYEAPGLALLYIAYERLVTGIHNEDTIEQYRENGRRLGRLLYQGRWFDPQAIMLRETAQRWVARAVTGEVTVELRRGNDYSIIGTRSPNLTYQPERLSMEKVQSMFSPRDRIGQLTMRNLDITDTRDKLRIYSQVGLLAAGESSALPKLKEDESGN.

Residues 17-25 and alanine 43 each bind ATP; that span reads AFSGGLDTS. Tyrosine 99 contributes to the L-citrulline binding site. Positions 129 and 131 each coordinate ATP. L-aspartate contacts are provided by threonine 131, asparagine 135, and aspartate 136. Asparagine 135 contributes to the L-citrulline binding site. Aspartate 136 serves as a coordination point for ATP. Positions 139 and 192 each coordinate L-citrulline. Aspartate 194 provides a ligand contact to ATP. 3 residues coordinate L-citrulline: threonine 201, glutamate 203, and glutamate 280.

This sequence belongs to the argininosuccinate synthase family. Type 2 subfamily. As to quaternary structure, homotetramer.

The protein resides in the cytoplasm. The enzyme catalyses L-citrulline + L-aspartate + ATP = 2-(N(omega)-L-arginino)succinate + AMP + diphosphate + H(+). It functions in the pathway amino-acid biosynthesis; L-arginine biosynthesis; L-arginine from L-ornithine and carbamoyl phosphate: step 2/3. The chain is Argininosuccinate synthase from Burkholderia mallei (strain NCTC 10247).